The primary structure comprises 204 residues: LexA repressor (204 aa).

Positions 28–48 (VREIGEAVGLASSSTVHGHLD) form a DNA-binding region, H-T-H motif. Catalysis depends on for autocatalytic cleavage activity residues Ser-126 and Lys-164.

Belongs to the peptidase S24 family. As to quaternary structure, homodimer.

The enzyme catalyses Hydrolysis of Ala-|-Gly bond in repressor LexA.. Represses a number of genes involved in the response to DNA damage (SOS response), including recA and lexA. In the presence of single-stranded DNA, RecA interacts with LexA causing an autocatalytic cleavage which disrupts the DNA-binding part of LexA, leading to derepression of the SOS regulon and eventually DNA repair. The protein is LexA repressor of Exiguobacterium sibiricum (strain DSM 17290 / CCUG 55495 / CIP 109462 / JCM 13490 / 255-15).